We begin with the raw amino-acid sequence, 291 residues long: Methionine aminopeptidase (291 aa).

H118 contributes to the substrate binding site. 3 residues coordinate a divalent metal cation: D135, D146, and H209. Position 216 (H216) interacts with substrate. A divalent metal cation is bound by residues E241 and E273.

This sequence belongs to the peptidase M24A family. Methionine aminopeptidase type 1 subfamily. As to quaternary structure, monomer. Co(2+) serves as cofactor. Zn(2+) is required as a cofactor. It depends on Mn(2+) as a cofactor. The cofactor is Fe(2+).

The enzyme catalyses Release of N-terminal amino acids, preferentially methionine, from peptides and arylamides.. Removes the N-terminal methionine from nascent proteins. The N-terminal methionine is often cleaved when the second residue in the primary sequence is small and uncharged (Met-Ala-, Cys, Gly, Pro, Ser, Thr, or Val). Requires deformylation of the N(alpha)-formylated initiator methionine before it can be hydrolyzed. This chain is Methionine aminopeptidase, found in Chlamydia muridarum (strain MoPn / Nigg).